The following is a 316-amino-acid chain: MTQGKLSVANKAPGTEGQQQANGEKKETPAVPSAPPSYEEATSGEGLKAGAFPPAPSAVPLHPSWAYVDPNSSSSYESGFPTGDHEFFTTFSWDDQKVRRVFIRKVYTILLIQLLVTLGVVALFTFCDPVKDYVQANPGWYWASYAVFFATYLTLACCSGPRRHFPWNLILLTIFTLSMAYLTGMLSSYYNTTSVLLCLSITALVCLSVTVFSFQTKFDFTSCQGVLFVLLMTLFFSGLILAILLPFQYVPWLHAVYAVLGAGVFTLFLAFDTQLLMGSRRHSLSPEEYIFGALNIYLDIIYIFTFFLQLFGTNRE.

Residues 1–46 (MTQGKLSVANKAPGTEGQQQANGEKKETPAVPSAPPSYEEATSGEG) are disordered. The next 3 helical transmembrane spans lie at 106–126 (VYTI…LFTF), 138–158 (PGWY…LACC), and 165–185 (FPWN…LTGM). Asparagine 191 carries an N-linked (GlcNAc...) asparagine glycan. Helical transmembrane passes span 194-214 (SVLL…VFSF), 225-245 (GVLF…AILL), 251-271 (PWLH…FLAF), and 290-310 (IFGA…FLQL).

It belongs to the BI1 family. LFG subfamily. Interacts with FAS/TNFRSF6 and BAX.

The protein resides in the cell membrane. It localises to the membrane raft. Its subcellular location is the postsynaptic cell membrane. Functionally, antiapoptotic protein which protects cells uniquely from Fas-induced apoptosis. Regulates Fas-mediated apoptosis in neurons by interfering with caspase-8 activation. Plays a role in cerebellar development by affecting cerebellar size, internal granular layer (IGL) thickness, and Purkinje cell (PC) development. The chain is Protein lifeguard 2 (FAIM2) from Bos taurus (Bovine).